A 151-amino-acid chain; its full sequence is Ribosome maturation factor RimP (151 aa).

Belongs to the RimP family.

Its subcellular location is the cytoplasm. In terms of biological role, required for maturation of 30S ribosomal subunits. This Shewanella frigidimarina (strain NCIMB 400) protein is Ribosome maturation factor RimP.